Here is a 547-residue protein sequence, read N- to C-terminus: Chaperonin GroEL (547 aa).

ATP contacts are provided by residues 30–33, lysine 51, 87–91, glycine 415, 479–481, and aspartate 495; these read TLGP, DGTTT, and NAA.

Belongs to the chaperonin (HSP60) family. Forms a cylinder of 14 subunits composed of two heptameric rings stacked back-to-back. Interacts with the co-chaperonin GroES.

The protein localises to the cytoplasm. It catalyses the reaction ATP + H2O + a folded polypeptide = ADP + phosphate + an unfolded polypeptide.. Together with its co-chaperonin GroES, plays an essential role in assisting protein folding. The GroEL-GroES system forms a nano-cage that allows encapsulation of the non-native substrate proteins and provides a physical environment optimized to promote and accelerate protein folding. This is Chaperonin GroEL from Cupriavidus necator (strain ATCC 17699 / DSM 428 / KCTC 22496 / NCIMB 10442 / H16 / Stanier 337) (Ralstonia eutropha).